The sequence spans 693 residues: MGIARSINSFMFFFFLMILSNASKSSVLAEATTAKFTFIGFKENQTDIQTEGASTIQHDNDLLRLTNRKQNVTGTAFYRKPIRLRELTNSSDIKVCSFSTSFVFVILPSSPGNGGFGFTFTLSPTPNRPGAESAQYLGLLNRTNNGNPSNHVFAVEFDTVQGFKDGADRRGNHIGLNFNNLSSNVQEPLIYYDTEDRKEDFQLESGEPIRVLIDYDGSSETLNVTIYPTRLEFKPKKPLISRRVSELSEIVKDEMYVGFTAATGKDQSSAHYVMGWSFSSCGENPMADWLEISRLPPPPRLSNKKGYNSQVIVLIVALSIVTLVLLVLLFIFVMYKRRIQEEDTLEDWEIDYPHRFRYRDLYLATKKFKESEIIGTGGFGIVYRGNLSSSGPIAVKKITSNSLQGVREFMAEIESLGRLGHKNLVNLQGWCKHKNELLLIYDYIPNGSLDSLLYQTPRRNGIVLPWDVRFEIIKGIASGLLYLHEEWEQIVVHRDVKPSNVLIDEDMNAKLGDFGLARLYERGTLTQTTKIVGTLGYMAPELTRNGKGSTASDVFAFGVLLLEIVCGNKPTNAENFFLADWVMEFHTNGGILCVVDQNLGSSFNGREAKLALVVGLLCCHQKPKFRPSMRMVLRYLNGEENVPQIDENWGFSDSSRDDHKSNVVGYVSSDRASSSNTFSSFSNVSSSSIVSGR.

An N-terminal signal peptide occupies residues 1-22 (MGIARSINSFMFFFFLMILSNA). N-linked (GlcNAc...) asparagine glycans are attached at residues N21, N44, N71, N89, N141, N180, and N223. Residues 23 to 311 (SKSSVLAEAT…SNKKGYNSQV (289 aa)) are Extracellular-facing. The tract at residues 33–279 (TAKFTFIGFK…AHYVMGWSFS (247 aa)) is legume-lectin like. The chain crosses the membrane as a helical span at residues 312 to 332 (IVLIVALSIVTLVLLVLLFIF). Residues 333-693 (VMYKRRIQEE…VSSSSIVSGR (361 aa)) lie on the Cytoplasmic side of the membrane. The 275-residue stretch at 368 to 642 (FKESEIIGTG…LRYLNGEENV (275 aa)) folds into the Protein kinase domain. ATP is bound by residues 374–382 (IGTGGFGIV) and K396. D495 functions as the Proton acceptor in the catalytic mechanism. Residues 670 to 693 (DRASSSNTFSSFSNVSSSSIVSGR) form a disordered region.

This sequence in the C-terminal section; belongs to the protein kinase superfamily. Ser/Thr protein kinase family. The protein in the N-terminal section; belongs to the leguminous lectin family.

It localises to the cell membrane. It carries out the reaction L-seryl-[protein] + ATP = O-phospho-L-seryl-[protein] + ADP + H(+). It catalyses the reaction L-threonyl-[protein] + ATP = O-phospho-L-threonyl-[protein] + ADP + H(+). The protein is Probable L-type lectin-domain containing receptor kinase VI.1 (LECRK61) of Arabidopsis thaliana (Mouse-ear cress).